The sequence spans 740 residues: Zinc finger CCCH domain-containing protein 14 (740 aa).

Disordered regions lie at residues serine 82 to glycine 240, valine 254 to valine 314, isoleucine 390 to glutamate 426, and serine 444 to threonine 469. Composition is skewed to basic and acidic residues over residues glutamate 87–arginine 158 and glutamate 176–histidine 185. Residues aspartate 186–glutamate 200 are compositionally biased toward basic residues. Residues isoleucine 204–alanine 214 are compositionally biased toward polar residues. A compositionally biased stretch (polar residues) spans serine 393–asparagine 409. Over residues isoleucine 414–glutamate 426 the composition is skewed to acidic residues. 2 C3H1-type zinc fingers span residues histidine 499–threonine 522 and threonine 523–proline 543. Positions isoleucine 623–proline 661 are disordered. Residues glutamate 632–alanine 652 show a composition bias toward basic and acidic residues. 3 C3H1-type zinc fingers span residues leucine 668–lysine 691, cysteine 674–lysine 691, and cysteine 693–lysine 709.

It belongs to the ZC3H14 family.

It localises to the nucleus. The protein resides in the cytoplasm. In terms of biological role, RNA-binding protein involved in the biogenesis of circular RNAs (circRNAs), which are produced by back-splicing circularization of pre-mRNAs. The polypeptide is Zinc finger CCCH domain-containing protein 14 (sut-2) (Caenorhabditis elegans).